The chain runs to 334 residues: Short-chain dehydrogenase/reductase (334 aa).

NADP(+) contacts are provided by leucine 44, lysine 68, aspartate 93, asparagine 120, and lysine 152. Active-site proton donor residues include serine 176 and tyrosine 205. NADP(+) contacts are provided by tyrosine 205, lysine 209, and asparagine 239. The Lowers pKa of active site Tyr role is filled by lysine 209.

It belongs to the short-chain dehydrogenases/reductases (SDR) family.

It functions in the pathway mycotoxin biosynthesis. Functionally, short-chain dehydrogenase/reductase; part of the 2 gene clusters that mediate the biosynthesis of fusicoccins, diterpene glucosides that display phytohormone-like activity and function as potent activators of plasma membrane H(+)-ATPases in plants by modifying 14-3-3 proteins and cause the plant disease constriction canker. The first step in the pathway is performed by the fusicoccadiene synthase PaFS that possesses both prenyl transferase and terpene cyclase activity, converting isopentenyl diphosphate and dimethylallyl diphosphate into geranylgeranyl diphosphate (GGDP) and successively converting GGDP into fusicocca-2,10(14)-diene, a precursor for fusicoccin H. The second step is the oxidation at the C-8 position by the cytochrome P450 monooxygenase PaP450-2 to yield fusicocca-2,10(14)-diene-8-beta-ol. The cytochrome P450 monooxygenase PaP450-1 then catalyzes the hydroxylation at the C-16 position to produce fusicocca-2,10(14)-diene-8-beta,16-diol. The dioxygenase fc-dox then catalyzes the 16-oxydation of fusicocca-2,10(14)-diene-8-beta,16-diol to yield an aldehyde (8-beta-hydroxyfusicocca-1,10(14)-dien-16-al). The short-chain dehydrogenase/reductase fc-sdr catalyzes the reduction of the aldehyde to yield fusicocca-1,10(14)-diene-8-beta,16-diol. The next step is the hydroxylation at C-9 performed by the cytochrome P450 monooxygenase PaP450-3 that leads to fusicoccin H aglycon which is glycosylated to fusicoccin H by the O-glycosyltransferase PaGT. Hydroxylation at C-12 by the cytochrome P450 monooxygenase PaP450-4 leads then to the production of fusicoccin Q and is followed by methylation by the O-methyltransferase PaMT to yield fusicoccin P. Fusicoccin P is further converted to fusicoccin J via prenylation by the O-glucose prenyltransferase PaPT. Cytochrome P450 monooxygenase PaP450-5 then performs hydroxylation at C-19 to yield dideacetyl-fusicoccin A which is acetylated to 3'-O-deacetyl-fusicoccin A by the O-acetyltransferase PaAT-2. Finally, a another acetylation by the O-acetyltransferase PaAT-1 yields fusicoccin A. In Phomopsis amygdali (Fusicoccum amygdali), this protein is Short-chain dehydrogenase/reductase.